The chain runs to 525 residues: Sucrose transport protein (525 aa).

At 1–37 (MAGRNIKNGENNKIAGSSLHLEKNPTTPPEAEATLKK) the chain is on the cytoplasmic side. The next 12 helical transmembrane spans lie at 38 to 58 (LGLVASVAAGVQFGWALQLSL), 72 to 92 (WAAYIWLCGPISGMIVQPLVG), 107 to 127 (PFIAAGAALVAVAVGLIGFAA), 145 to 165 (AIAVFVVGFWILDVANNTLQG), 184 to 204 (YANAFFSFFMALGNIGGYAAG), 230 to 250 (SCFFISITLLIVLTILALSVV), 295 to 315 (MLILLLVTALNWIAWFPFLLF), 338 to 358 (GVHAGALGLMINSVVLGVMSL), 373 to 393 (LWGIVNIILAVCLAMTVLVTK), 422 to 442 (LAIFAVLGIPLAITFSIPFAL), 455 to 475 (GLSLGVLNLAIVVPQMFVSVT), and 488 to 508 (LPAFVVGAVAATASAVLSFTL). Residues 509–525 (LPSPPPEAKIGGSMGGH) lie on the Cytoplasmic side of the membrane.

It belongs to the glycoside-pentoside-hexuronide (GPH) cation symporter transporter (TC 2.A.2.4) family.

The protein localises to the membrane. It functions in the pathway glycan biosynthesis; sucrose metabolism. Functionally, responsible for the transport of sucrose into the cell, with the concomitant uptake of protons (symport system). Can also transport maltose at a lesser rate. This chain is Sucrose transport protein, found in Spinacia oleracea (Spinach).